We begin with the raw amino-acid sequence, 444 residues long: N-succinylarginine dihydrolase (444 aa).

Residues serine 19–serine 28, asparagine 110, and histidine 137–arginine 138 each bind substrate. The active site involves glutamate 174. Residue arginine 214 coordinates substrate. The active site involves histidine 250. Positions 252 and 362 each coordinate substrate. The active-site Nucleophile is cysteine 368.

This sequence belongs to the succinylarginine dihydrolase family. Homodimer.

The catalysed reaction is N(2)-succinyl-L-arginine + 2 H2O + 2 H(+) = N(2)-succinyl-L-ornithine + 2 NH4(+) + CO2. Its pathway is amino-acid degradation; L-arginine degradation via AST pathway; L-glutamate and succinate from L-arginine: step 2/5. Catalyzes the hydrolysis of N(2)-succinylarginine into N(2)-succinylornithine, ammonia and CO(2). The sequence is that of N-succinylarginine dihydrolase from Photobacterium profundum (strain SS9).